The following is a 321-amino-acid chain: Lipoyl synthase (321 aa).

Residues Cys-68, Cys-73, Cys-79, Cys-94, Cys-98, Cys-101, and Ser-308 each coordinate [4Fe-4S] cluster. In terms of domain architecture, Radical SAM core spans 80–297 (FNHGTATFMI…KALADELGFT (218 aa)).

The protein belongs to the radical SAM superfamily. Lipoyl synthase family. It depends on [4Fe-4S] cluster as a cofactor.

The protein resides in the cytoplasm. It carries out the reaction [[Fe-S] cluster scaffold protein carrying a second [4Fe-4S](2+) cluster] + N(6)-octanoyl-L-lysyl-[protein] + 2 oxidized [2Fe-2S]-[ferredoxin] + 2 S-adenosyl-L-methionine + 4 H(+) = [[Fe-S] cluster scaffold protein] + N(6)-[(R)-dihydrolipoyl]-L-lysyl-[protein] + 4 Fe(3+) + 2 hydrogen sulfide + 2 5'-deoxyadenosine + 2 L-methionine + 2 reduced [2Fe-2S]-[ferredoxin]. The protein operates within protein modification; protein lipoylation via endogenous pathway; protein N(6)-(lipoyl)lysine from octanoyl-[acyl-carrier-protein]: step 2/2. Catalyzes the radical-mediated insertion of two sulfur atoms into the C-6 and C-8 positions of the octanoyl moiety bound to the lipoyl domains of lipoate-dependent enzymes, thereby converting the octanoylated domains into lipoylated derivatives. The chain is Lipoyl synthase from Shewanella frigidimarina (strain NCIMB 400).